Reading from the N-terminus, the 395-residue chain is 3-sulfinopropanoyl-CoA desulfinase (395 aa).

FAD-binding positions include Ile121–Ser124, Ser130, and Tyr153–Thr156. Tyr243–Asn244 serves as a coordination point for substrate. FAD contacts are provided by residues Arg272, Gln339, Ser343, Gly366–Gln370, and Gln387.

It belongs to the acyl-CoA dehydrogenase family. In terms of assembly, homotrimer or homotetramer. It depends on FAD as a cofactor.

It carries out the reaction 3-sulfinopropanoyl-CoA + H2O = propanoyl-CoA + sulfite + H(+). Its function is as follows. Catalyzes the conversion 3-sulfinopropanoyl-CoA (3SP-CoA) to propanoyl-CoA by abstraction of sulfite. Does not show dehydrogenase activity. The sequence is that of 3-sulfinopropanoyl-CoA desulfinase from Cupriavidus necator (strain ATCC 43291 / DSM 13513 / CCUG 52238 / LMG 8453 / N-1) (Ralstonia eutropha).